We begin with the raw amino-acid sequence, 305 residues long: Ferrochelatase (305 aa).

Fe cation-binding residues include His-182 and Glu-262.

The protein belongs to the ferrochelatase family.

It localises to the cytoplasm. It carries out the reaction heme b + 2 H(+) = protoporphyrin IX + Fe(2+). It functions in the pathway porphyrin-containing compound metabolism; protoheme biosynthesis; protoheme from protoporphyrin-IX: step 1/1. In terms of biological role, catalyzes the ferrous insertion into protoporphyrin IX. This is Ferrochelatase from Herpetosiphon aurantiacus (strain ATCC 23779 / DSM 785 / 114-95).